The chain runs to 326 residues: MIERIWSGRNALYLLLLPFSLFYGLISNFTRLSYRWGWRKAWRAPVPVVVVGNLTAGGNGKTPVVIWLVQALQQRGLRVGVVSRGYGGKAEYYPLVLGPKTTTDEAGDEPVLIYQRTGATVAVAPVRAQAVKAVLRSAAVDIIITDDGLQHYALARDIEIVVIDGERRFGNGWWLPAGPMRERAARLQSVTAIVTNGGKALPGEMAMRLTPGLAVNLKTGERRPVTELDNIVAMAGIGHPPRFFNTLRQLGVTPLRQVAFADHQHYSAESLYSLTSSGQTLLMTEKDAVKASAFAADNWWYLPVDASLPTAEAEALLATITATSAG.

55–62 (TAGGNGKT) lines the ATP pocket.

The protein belongs to the LpxK family.

It carries out the reaction a lipid A disaccharide + ATP = a lipid IVA + ADP + H(+). Its pathway is glycolipid biosynthesis; lipid IV(A) biosynthesis; lipid IV(A) from (3R)-3-hydroxytetradecanoyl-[acyl-carrier-protein] and UDP-N-acetyl-alpha-D-glucosamine: step 6/6. Its function is as follows. Transfers the gamma-phosphate of ATP to the 4'-position of a tetraacyldisaccharide 1-phosphate intermediate (termed DS-1-P) to form tetraacyldisaccharide 1,4'-bis-phosphate (lipid IVA). The polypeptide is Tetraacyldisaccharide 4'-kinase (Erwinia tasmaniensis (strain DSM 17950 / CFBP 7177 / CIP 109463 / NCPPB 4357 / Et1/99)).